Reading from the N-terminus, the 402-residue chain is Imidazolonepropionase (402 aa).

Positions 66 and 68 each coordinate Fe(3+). Zn(2+) is bound by residues His66 and His68. 4-imidazolone-5-propanoate is bound by residues Arg75, Tyr138, and His171. N-formimidoyl-L-glutamate is bound at residue Tyr138. His236 is a binding site for Fe(3+). Zn(2+) is bound at residue His236. Residue Gln239 coordinates 4-imidazolone-5-propanoate. Residue Asp311 participates in Fe(3+) binding. Residue Asp311 participates in Zn(2+) binding. N-formimidoyl-L-glutamate contacts are provided by Asn313 and Gly315. Thr316 contacts 4-imidazolone-5-propanoate.

Belongs to the metallo-dependent hydrolases superfamily. HutI family. Zn(2+) serves as cofactor. Requires Fe(3+) as cofactor.

The protein localises to the cytoplasm. The enzyme catalyses 4-imidazolone-5-propanoate + H2O = N-formimidoyl-L-glutamate. The protein operates within amino-acid degradation; L-histidine degradation into L-glutamate; N-formimidoyl-L-glutamate from L-histidine: step 3/3. Functionally, catalyzes the hydrolytic cleavage of the carbon-nitrogen bond in imidazolone-5-propanoate to yield N-formimidoyl-L-glutamate. It is the third step in the universal histidine degradation pathway. In Pseudomonas paraeruginosa (strain DSM 24068 / PA7) (Pseudomonas aeruginosa (strain PA7)), this protein is Imidazolonepropionase.